The following is a 120-amino-acid chain: Holo-[acyl-carrier-protein] synthase (120 aa).

2 residues coordinate Mg(2+): aspartate 8 and glutamate 60.

This sequence belongs to the P-Pant transferase superfamily. AcpS family. Mg(2+) serves as cofactor.

The protein localises to the cytoplasm. It carries out the reaction apo-[ACP] + CoA = holo-[ACP] + adenosine 3',5'-bisphosphate + H(+). Transfers the 4'-phosphopantetheine moiety from coenzyme A to a Ser of acyl-carrier-protein. In Anaplasma marginale (strain St. Maries), this protein is Holo-[acyl-carrier-protein] synthase.